The following is a 535-amino-acid chain: MNLKILVGLFILGIIILSAMTFLNFTTIVAQDKGDQQPKGPIVYTYTEYNGTYFPHILTVVYYPCNATCSNLGFPSVWPVSNENQCHNAVVNTTCQALIEGVDWQLPLLNYVGGVAIPLSTPPCKLPWAQQLGVKGALVYYTQMVGEPLGVTLACGLLYATEDSMPGSITAINPVTGKIVWMANGLAGPAMNNPVVWHGIVYVSVGGVCFTFSQFVHFEDHQYCKIHRGRCGAVYAFNATNGQLLWMRFTYGEAMPAPAIYDGILAYVTGGGCFVGVNATTGQTLWVDHFPGFIANMASVNYYVLPNGTPLFIAGFTYTAPPYGYIIAVNGLNGHEAWNATMPAPYVGANTGLGDVAPAVDQQLGIVVDNDIANFSNGYVDMVTFALNATNGKPLWAVNTGRGPIPPAYKGGMPLIVGNVVYDGNPSLGTVNAICIKTGKILWSTKLPCLQTPPKFPGGPRGSPTYYHGLLWVSAGQYVYVINPKNGDILTFYWIGGRLGIMNPVIAGNTMFLSNSYGWIVAIPLSQIYPAYIYY.

Residues 1 to 39 form the signal peptide; that stretch reads MNLKILVGLFILGIIILSAMTFLNFTTIVAQDKGDQQPK. Asn50 carries an N-linked (GlcNAc...) asparagine glycan.

This sequence belongs to the tetrathionate hydrolase family. As to quaternary structure, monomer and homodimer; in equilibrium.

The protein localises to the cell surface. It carries out the reaction tetrathionate + H2O = sulfur + thiosulfate + sulfate + H(+). In terms of biological role, catalyzes the hydrolysis of tetrathionate to generate elemental sulfur, thiosulfate and sulfate. The sequence is that of Tetrathionate hydrolase from Acidianus ambivalens (Desulfurolobus ambivalens).